The sequence spans 824 residues: Protein-glutamine gamma-glutamyltransferase K (824 aa).

Over residues 1-10 (MEGPRSDVGR) the composition is skewed to basic and acidic residues. 2 disordered regions span residues 1–44 (MEGP…GGRS) and 61–110 (DDWG…AAGD). Threonine 20 carries the phosphothreonine modification. Phosphoserine is present on residues serine 22, serine 70, serine 92, serine 100, and serine 103. A compositionally biased stretch (low complexity) spans 65-76 (PEPSGSRSRGTS). Over residues 85 to 100 (GDSRGRDSRGGRRPES) the composition is skewed to basic and acidic residues. Active-site residues include cysteine 385, histidine 444, and aspartate 467. Ca(2+) contacts are provided by asparagine 507, aspartate 509, glutamate 556, and glutamate 561. Residues 801 to 824 (RGFSEAVGDSRSGENIPMAFRGGA) are disordered. Serine 812 is modified (phosphoserine).

Belongs to the transglutaminase superfamily. Transglutaminase family. As to quaternary structure, interacts with PLAAT4. The cofactor is Ca(2+). Palmitoylated. Post-translationally, the membrane anchorage region possesses a cluster of five cysteines within which fatty acid(s) may become thioester-linked. It is subject to phorbol ester-stimulated phosphorylation and is hypersensitive to proteolysis, which releases the enzyme in a soluble form. In terms of processing, tyrosine-phosphorylated.

The protein localises to the membrane. The catalysed reaction is L-glutaminyl-[protein] + L-lysyl-[protein] = [protein]-L-lysyl-N(6)-5-L-glutamyl-[protein] + NH4(+). Functionally, catalyzes the cross-linking of proteins and the conjugation of polyamines to proteins. Responsible for cross-linking epidermal proteins during formation of the stratum corneum. Involved in cell proliferation. The chain is Protein-glutamine gamma-glutamyltransferase K (Tgm1) from Rattus norvegicus (Rat).